The following is a 502-amino-acid chain: Neuronal acetylcholine receptor subunit alpha-7 (502 aa).

Residues Met-1–Gln-22 form the signal peptide. Over Gly-23 to Tyr-233 the chain is Extracellular. Ca(2+)-binding residues include Arg-42 and Val-44. Residues Asn-46, Asn-90, and Asn-133 are each glycosylated (N-linked (GlcNAc...) asparagine). Cys-150 and Cys-164 are joined by a disulfide. The Ca(2+) site is built by Ser-172 and Tyr-210. Cys-212 and Cys-213 are oxidised to a cystine. The next 3 membrane-spanning stretches (helical) occupy residues Gly-234–Leu-254, Ile-262–Ile-282, and Gln-295–Leu-315. The tract at residues Glu-260–Thr-267 is essential for TMEM35A/NACHO-mediated proper subunit assembly and trafficking to cell membrane. At Arg-316 to Arg-469 the chain is on the cytoplasmic side. Residues Leu-470–Ala-490 traverse the membrane as a helical segment.

This sequence belongs to the ligand-gated ion channel (TC 1.A.9) family. Acetylcholine receptor (TC 1.A.9.1) subfamily. Alpha-7/CHRNA7 sub-subfamily. In terms of assembly, homopentamer. Can also form heteropentamers with CHRNB2, mainly found in basal forebrain cholinergic neurons. Interacts with RIC3; which is required for proper folding and assembly. Interacts with LYPD6. Interacts with CANX. In terms of processing, glycosylations at Asn-46, Asn-90 and Asn-133 are essential for TMEM35A/NACHO-mediated proper subunit assembly and trafficking to the cell membrane. As to expression, expressed in neurons. Expressed in umbrella cells of urothelium (at protein level).

Its subcellular location is the postsynaptic cell membrane. The protein resides in the cell membrane. It catalyses the reaction Ca(2+)(in) = Ca(2+)(out). The catalysed reaction is K(+)(in) = K(+)(out). The enzyme catalyses Na(+)(in) = Na(+)(out). It carries out the reaction choline(out) = choline(in). It catalyses the reaction NH4(+)(in) = NH4(+)(out). The catalysed reaction is L-arginine(in) = L-arginine(out). The enzyme catalyses guanidine(out) = guanidine(in). Its activity is regulated as follows. Activated by a myriad of ligands such as acetylcholine, cytisine, nicotine, choline and epibatidine. Oligomeric amyloid-beta protein 42 activates specifially CHRNA7:CHRNB2 nAchRs. Activity is modulated by positive allosteric modulators (PAMs), such as flavonoids, with a wide range of chemical diversity, pharmacological sensitivity and efficacy. AChR activity is inhibited by the antagonists alpha-conotoxons RgIA, ImI and ImII, small disulfide-constrained peptides from cone snails. Alpha-conotoxin PnIC selectively inhibits CHRNA7:CHRNB2 over CHRNA7 homopentamer. Component of neuronal acetylcholine receptors (nAChRs) that function as pentameric, ligand-gated cation channels with high calcium permeability among other activities. nAChRs are excitatory neurotrasnmitter receptors formed by a collection of nAChR subunits known to mediate synaptic transmission in the nervous system and the neuromuscular junction. Each nAchR subunit confers differential attributes to channel properties, including activation, deactivation and desensitization kinetics, pH sensitivity, cation permeability, and binding to allosteric modulators. CHRNA7 forms homopentameric neuronal acetylcholine receptors abundantly expressed in the central nervous system, characterized by fast desensitization and high calcium permeability. Also forms heteropentamers with CHRNB2, mainly expressed in basal forebrain cholinergic neurons. Involved in the modulation of calcium-dependent signaling pathways and influences the release of neurotransmitters, including dopamine, glutamate and GABA. Also expressed in non-neuronal cells such as immune cells like lymphocytes, monocytes and macrophages. In T cells, activation induces metabotropic signaling that results in an increase of intracellular Ca2+ concentrations, independent of ionotropic receptor functions. In macrophages, required for acetylcholine-mediated inhibition of TNF and other inflammatory cytokine release. Once activated by acetylcholine, nicotine or other agonists, selectively inhibits production of pro-inflammatory cytokines while leaving anti-inflammatory cytokines undisturbed. Stimulates the cholinergic anti-inflammatory pathway, controlling inflammation by inhibiting NFKB nuclear translocation and activating the JAK2-STAT3 pathway, independently of ion channel activity. Also expressed in the urothelium where it modulates reflex bladder activity by increasing intracellular calcium through internal stores and decreasing basal ATP release. The chain is Neuronal acetylcholine receptor subunit alpha-7 (Chrna7) from Rattus norvegicus (Rat).